Here is a 310-residue protein sequence, read N- to C-terminus: Acetyl-coenzyme A carboxylase carboxyl transferase subunit beta (310 aa).

One can recognise a CoA carboxyltransferase N-terminal domain in the interval 27–296 (LWRKCPNCEA…QDRDAEPDDT (270 aa)). The Zn(2+) site is built by C31, C34, C50, and C53. The segment at 31–53 (CPNCEAVLYLPELERHQSVCPKC) adopts a C4-type zinc-finger fold. A disordered region spans residues 282 to 310 (THQPHQDRDAEPDDTASQSTLDEFSQADH).

The protein belongs to the AccD/PCCB family. As to quaternary structure, acetyl-CoA carboxylase is a heterohexamer composed of biotin carboxyl carrier protein (AccB), biotin carboxylase (AccC) and two subunits each of ACCase subunit alpha (AccA) and ACCase subunit beta (AccD). It depends on Zn(2+) as a cofactor.

The protein localises to the cytoplasm. It carries out the reaction N(6)-carboxybiotinyl-L-lysyl-[protein] + acetyl-CoA = N(6)-biotinyl-L-lysyl-[protein] + malonyl-CoA. It participates in lipid metabolism; malonyl-CoA biosynthesis; malonyl-CoA from acetyl-CoA: step 1/1. Functionally, component of the acetyl coenzyme A carboxylase (ACC) complex. Biotin carboxylase (BC) catalyzes the carboxylation of biotin on its carrier protein (BCCP) and then the CO(2) group is transferred by the transcarboxylase to acetyl-CoA to form malonyl-CoA. The polypeptide is Acetyl-coenzyme A carboxylase carboxyl transferase subunit beta (Chromohalobacter salexigens (strain ATCC BAA-138 / DSM 3043 / CIP 106854 / NCIMB 13768 / 1H11)).